Here is a 72-residue protein sequence, read N- to C-terminus: U10-myrmicitoxin-Tb1a (72 aa).

Positions 1–26 (MRVSYLSLTLTIVVVIAIIYAPETEA) are cleaved as a signal peptide. Residues 27–36 (KAWADADAEA) constitute a propeptide that is removed on maturation.

Belongs to the formicidae venom precursor-01 superfamily. In terms of tissue distribution, expressed by the venom gland.

It is found in the secreted. Functionally, in vivo, this neurotoxin paralyzes about 40% of blowflies (L.caesar) one hour after intrathoracic injection, when tested at high doses (28 nmol/g). In Tetramorium bicarinatum (Tramp ant), this protein is U10-myrmicitoxin-Tb1a.